Here is a 573-residue protein sequence, read N- to C-terminus: Ribonuclease J (573 aa).

The interval 1-29 (MENQERKPRRRRRRRPQEGSQGGPQDHVE) is disordered. Positions 93, 95, 97, 98, 168, and 190 each coordinate Zn(2+). Substrate contacts are provided by residues 259–261 (ASH) and 390–394 (HASGH). Histidine 416 contributes to the Zn(2+) binding site.

The protein belongs to the metallo-beta-lactamase superfamily. RNA-metabolizing metallo-beta-lactamase-like family. Bacterial RNase J subfamily. Homodimer. May be a subunit of the RNA degradosome. It depends on Zn(2+) as a cofactor.

It is found in the cytoplasm. Functionally, an RNase that has endonuclease and possibly 5'-3' exonuclease activity. Probably involved in maturation of rRNA and in some organisms also mRNA maturation and/or decay. This chain is Ribonuclease J, found in Thermus thermophilus (strain ATCC BAA-163 / DSM 7039 / HB27).